Here is a 165-residue protein sequence, read N- to C-terminus: Nucleotide-binding protein Ccur92_01650 (165 aa).

This sequence belongs to the YajQ family.

Functionally, nucleotide-binding protein. The protein is Nucleotide-binding protein Ccur92_01650 of Campylobacter curvus (strain 525.92).